A 153-amino-acid chain; its full sequence is Flagellar assembly factor FliW (153 aa).

The protein belongs to the FliW family. In terms of assembly, interacts with translational regulator CsrA and flagellin(s).

It localises to the cytoplasm. In terms of biological role, acts as an anti-CsrA protein, binds CsrA and prevents it from repressing translation of its target genes, one of which is flagellin. Binds to flagellin and participates in the assembly of the flagellum. In Heliobacterium modesticaldum (strain ATCC 51547 / Ice1), this protein is Flagellar assembly factor FliW.